Reading from the N-terminus, the 333-residue chain is Casein kinase II subunit alpha-3 (333 aa).

Residues 34–319 enclose the Protein kinase domain; sequence YEVVRKVGRG…AREAMDHPYF (286 aa). ATP contacts are provided by residues 40–48 and Lys63; that span reads VGRGKYSEV. The active-site Proton acceptor is Asp151.

This sequence belongs to the protein kinase superfamily. Ser/Thr protein kinase family. CK2 subfamily. In terms of assembly, heterotetramer of two catalytic alpha subunits and two regulatory beta subunits.

The protein localises to the nucleus. It localises to the nucleolus. Its subcellular location is the cytoplasm. The catalysed reaction is L-seryl-[protein] + ATP = O-phospho-L-seryl-[protein] + ADP + H(+). It carries out the reaction L-threonyl-[protein] + ATP = O-phospho-L-threonyl-[protein] + ADP + H(+). Functionally, casein kinases are operationally defined by their preferential utilization of acidic proteins such as caseins as substrates. The alpha chain contains the catalytic site. The tetrameric holoenzyme CK2 is composed of two alpha and two beta subunits. Acts as a circadian clock component that maintains the correct period length through phosphorylation of CCA1. In Arabidopsis thaliana (Mouse-ear cress), this protein is Casein kinase II subunit alpha-3.